The primary structure comprises 264 residues: tRNA pseudouridine synthase A (264 aa).

The active-site Nucleophile is the Asp-51. Residue Tyr-109 coordinates substrate.

This sequence belongs to the tRNA pseudouridine synthase TruA family. As to quaternary structure, homodimer.

The catalysed reaction is uridine(38/39/40) in tRNA = pseudouridine(38/39/40) in tRNA. Functionally, formation of pseudouridine at positions 38, 39 and 40 in the anticodon stem and loop of transfer RNAs. In Vibrio vulnificus (strain CMCP6), this protein is tRNA pseudouridine synthase A.